The primary structure comprises 144 residues: Large ribosomal subunit protein uL15 (144 aa).

The tract at residues 1–53 (MRLNTLSPAEGAKHAPKRVGRGIGSGLGKTAGRGHKGQNSRSGGGVRRGFEGG) is disordered. Over residues 21-31 (RGIGSGLGKTA) the composition is skewed to gly residues.

It belongs to the universal ribosomal protein uL15 family. As to quaternary structure, part of the 50S ribosomal subunit.

Functionally, binds to the 23S rRNA. The chain is Large ribosomal subunit protein uL15 from Serratia proteamaculans (strain 568).